Here is a 575-residue protein sequence, read N- to C-terminus: Major outer membrane protein MspA (575 aa).

Positions M1–A19 are cleaved as a signal peptide.

Its subcellular location is the cell outer membrane. Major component of the outer membrane sheath. In Treponema maltophilum, this protein is Major outer membrane protein MspA (mspA).